The primary structure comprises 100 residues: Urease subunit gamma (100 aa).

This sequence belongs to the urease gamma subunit family. In terms of assembly, heterotrimer of UreA (gamma), UreB (beta) and UreC (alpha) subunits. Three heterotrimers associate to form the active enzyme.

Its subcellular location is the cytoplasm. It catalyses the reaction urea + 2 H2O + H(+) = hydrogencarbonate + 2 NH4(+). It participates in nitrogen metabolism; urea degradation; CO(2) and NH(3) from urea (urease route): step 1/1. This Prochlorococcus marinus (strain AS9601) protein is Urease subunit gamma.